A 662-amino-acid chain; its full sequence is Calcium-dependent protease (662 aa).

Positions 196 to 529 (QWHLKETTIG…YGRINALKAV (334 aa)) constitute a Peptidase S8 domain. Catalysis depends on charge relay system residues aspartate 233, histidine 270, and serine 466. The 128-residue stretch at 535–662 (AQPEPVSIFT…IRSLTIELGF (128 aa)) folds into the P/Homo B domain.

It belongs to the peptidase S8 family.

The protein localises to the cytoplasm. Its function is as follows. Degrades phycobiliproteins in vitro. Has a substrate specificity similar to that of trypsin. The protein is Calcium-dependent protease (prcA) of Nostoc sp. (strain PCC 7120 / SAG 25.82 / UTEX 2576).